Here is a 318-residue protein sequence, read N- to C-terminus: CMRF35-like molecule 8 (318 aa).

The first 27 residues, 1-27, serve as a signal peptide directing secretion; it reads MTQLASAVWLPTLLLLLLLFWLPGCVP. The region spanning 28 to 129 is the Ig-like V-type domain; it reads LHGPSTMSGS…FDGSLGFDKY (102 aa). Over 28–185 the chain is Extracellular; it reads LHGPSTMSGS…HDYSQGLRLP (158 aa). A disulfide bridge links cysteine 46 with cysteine 113. The N-linked (GlcNAc...) asparagine glycan is linked to asparagine 93. Low complexity predominate over residues 139 to 148; sequence SEDPVSSPGP. The interval 139–174 is disordered; it reads SEDPVSSPGPTLETPVVSTSLPTKGPALGSNTEGHR. The helical transmembrane segment at 186 to 206 threads the bilayer; sequence ALLSVLALLLFLLVGTSLLAW. Over 207-318 the chain is Cytoplasmic; sequence RMFQKRLVKA…PRKGLSDLYL (112 aa). Polar residues predominate over residues 284 to 296; the sequence is QDSHANGDSLHQP. The segment at 284–318 is disordered; the sequence is QDSHANGDSLHQPQDQKAEYSEIQKPRKGLSDLYL. Residues 297–308 are compositionally biased toward basic and acidic residues; the sequence is QDQKAEYSEIQK. Tyrosine 303 carries the post-translational modification Phosphotyrosine.

This sequence belongs to the CD300 family. As to quaternary structure, upon tyrosine-phosphorylation, interacts with PTN6/SHP-1 and PTPN11/SHP-2 and INPP5D. Post-translationally, phosphorylated on tyrosine. In terms of processing, N-glycosylated. In terms of tissue distribution, present on the surface of the majority of myeloid cells and a subset of B-cells. Present on the surface of NK cells after IL-12 stimulation.

Its subcellular location is the cell membrane. Inhibitory receptor which may contribute to the down-regulation of cytolytic activity in natural killer (NK) cells, and to the down-regulation of mast cell degranulation. Negatively regulates the Toll-like receptor (TLR) signaling mediated by MYD88 but not TRIF through activation of PTPN6. The protein is CMRF35-like molecule 8 (Cd300a) of Mus musculus (Mouse).